Here is a 621-residue protein sequence, read N- to C-terminus: 1-deoxy-D-xylulose-5-phosphate synthase (621 aa).

Thiamine diphosphate is bound by residues H80 and 121-123 (GHS). A Mg(2+)-binding site is contributed by D152. Thiamine diphosphate-binding positions include 153–154 (GA), N181, Y288, and E370. N181 is a binding site for Mg(2+).

The protein belongs to the transketolase family. DXPS subfamily. In terms of assembly, homodimer. It depends on Mg(2+) as a cofactor. The cofactor is thiamine diphosphate.

The catalysed reaction is D-glyceraldehyde 3-phosphate + pyruvate + H(+) = 1-deoxy-D-xylulose 5-phosphate + CO2. Its pathway is metabolic intermediate biosynthesis; 1-deoxy-D-xylulose 5-phosphate biosynthesis; 1-deoxy-D-xylulose 5-phosphate from D-glyceraldehyde 3-phosphate and pyruvate: step 1/1. Catalyzes the acyloin condensation reaction between C atoms 2 and 3 of pyruvate and glyceraldehyde 3-phosphate to yield 1-deoxy-D-xylulose-5-phosphate (DXP). The chain is 1-deoxy-D-xylulose-5-phosphate synthase from Serratia proteamaculans (strain 568).